A 158-amino-acid polypeptide reads, in one-letter code: Probable cyclic pyranopterin monophosphate synthase (158 aa).

Residues 78-80 (MCH) and 114-115 (ME) each bind substrate. The active site involves Asp129.

It belongs to the MoaC family. In terms of assembly, homohexamer; trimer of dimers.

The enzyme catalyses (8S)-3',8-cyclo-7,8-dihydroguanosine 5'-triphosphate = cyclic pyranopterin phosphate + diphosphate. It participates in cofactor biosynthesis; molybdopterin biosynthesis. Its function is as follows. Catalyzes the conversion of (8S)-3',8-cyclo-7,8-dihydroguanosine 5'-triphosphate to cyclic pyranopterin monophosphate (cPMP). The chain is Probable cyclic pyranopterin monophosphate synthase from Methanosarcina acetivorans (strain ATCC 35395 / DSM 2834 / JCM 12185 / C2A).